The primary structure comprises 351 residues: Tropomodulin-2 (351 aa).

Position 25 is a phosphoserine (serine 25).

It belongs to the tropomodulin family. As to quaternary structure, binds to the N-terminus of tropomyosin and to actin. Neuronal-tissue specific.

Its subcellular location is the cytoplasm. It localises to the cytoskeleton. Blocks the elongation and depolymerization of the actin filaments at the pointed end. The Tmod/TM complex contributes to the formation of the short actin protofilament, which in turn defines the geometry of the membrane skeleton. This chain is Tropomodulin-2 (Tmod2), found in Mus musculus (Mouse).